The following is a 571-amino-acid chain: Proline--tRNA ligase (571 aa).

Belongs to the class-II aminoacyl-tRNA synthetase family. ProS type 1 subfamily. Homodimer.

It localises to the cytoplasm. The enzyme catalyses tRNA(Pro) + L-proline + ATP = L-prolyl-tRNA(Pro) + AMP + diphosphate. Functionally, catalyzes the attachment of proline to tRNA(Pro) in a two-step reaction: proline is first activated by ATP to form Pro-AMP and then transferred to the acceptor end of tRNA(Pro). As ProRS can inadvertently accommodate and process non-cognate amino acids such as alanine and cysteine, to avoid such errors it has two additional distinct editing activities against alanine. One activity is designated as 'pretransfer' editing and involves the tRNA(Pro)-independent hydrolysis of activated Ala-AMP. The other activity is designated 'posttransfer' editing and involves deacylation of mischarged Ala-tRNA(Pro). The misacylated Cys-tRNA(Pro) is not edited by ProRS. This is Proline--tRNA ligase from Buchnera aphidicola subsp. Schizaphis graminum (strain Sg).